Consider the following 230-residue polypeptide: Urease accessory protein UreG (230 aa).

33 to 40 (GPVGSGKT) lines the GTP pocket.

The protein belongs to the SIMIBI class G3E GTPase family. UreG subfamily. As to quaternary structure, homodimer. UreD, UreF and UreG form a complex that acts as a GTP-hydrolysis-dependent molecular chaperone, activating the urease apoprotein by helping to assemble the nickel containing metallocenter of UreC. The UreE protein probably delivers the nickel.

It is found in the cytoplasm. Functionally, facilitates the functional incorporation of the urease nickel metallocenter. This process requires GTP hydrolysis, probably effectuated by UreG. The protein is Urease accessory protein UreG of Mycobacteroides abscessus (strain ATCC 19977 / DSM 44196 / CCUG 20993 / CIP 104536 / JCM 13569 / NCTC 13031 / TMC 1543 / L948) (Mycobacterium abscessus).